The following is a 354-amino-acid chain: GDSL esterase/lipase At5g03820 (354 aa).

Residues 1-24 form the signal peptide; sequence MKMFIIMLMTFSVIACFYAGVGTG. Ser37 acts as the Nucleophile in catalysis. N-linked (GlcNAc...) asparagine glycosylation is found at Asn66, Asn100, Asn237, Asn256, Asn257, Asn261, and Asn321. Catalysis depends on residues Asp329 and His332.

This sequence belongs to the 'GDSL' lipolytic enzyme family.

It is found in the secreted. The protein is GDSL esterase/lipase At5g03820 of Arabidopsis thaliana (Mouse-ear cress).